Here is a 440-residue protein sequence, read N- to C-terminus: Serine hydroxymethyltransferase (440 aa).

123-125 contributes to the (6S)-5,6,7,8-tetrahydrofolate binding site; the sequence is GHI. Position 238 is an N6-(pyridoxal phosphate)lysine (Lys-238).

It belongs to the SHMT family. In terms of assembly, homodimer. It depends on pyridoxal 5'-phosphate as a cofactor.

It is found in the cytoplasm. The protein operates within amino-acid biosynthesis; glycine biosynthesis; glycine from L-serine: step 1/1. Functionally, catalyzes the reversible interconversion of serine and glycine with a modified folate serving as the one-carbon carrier. Also exhibits a pteridine-independent aldolase activity toward beta-hydroxyamino acids, producing glycine and aldehydes, via a retro-aldol mechanism. In Nitrosopumilus maritimus (strain SCM1), this protein is Serine hydroxymethyltransferase.